A 47-amino-acid chain; its full sequence is Mu-theraphotoxin-An1a (47 aa).

Intrachain disulfides connect C4/C34, C8/C39, and C22/C44.

In terms of processing, contains 3 disulfide bonds. In terms of tissue distribution, expressed by the venom gland.

It is found in the secreted. In terms of biological role, is toxic to insects. Reduces amplitude and frequency of spontaneous firing and inhibits voltage-gated sodium current (Nav) in the dorsal unpaired median (DUM) neurons of P.americana. The sequence is that of Mu-theraphotoxin-An1a from Acanthoscurria natalensis (Tarantula spider).